A 58-amino-acid chain; its full sequence is Large ribosomal subunit protein uL30 (58 aa).

The protein belongs to the universal ribosomal protein uL30 family. As to quaternary structure, part of the 50S ribosomal subunit.

This chain is Large ribosomal subunit protein uL30, found in Pseudomonas aeruginosa (strain LESB58).